A 117-amino-acid polypeptide reads, in one-letter code: Eukaryotic translation initiation factor 4E-binding protein 1 (117 aa).

2 stretches are compositionally biased toward polar residues: residues Met-1 to Ser-12 and Tyr-33 to Gly-47. Residues Met-1–Gly-47 are disordered. Ser-2 is modified (N-acetylserine). Phosphothreonine occurs at positions 36 and 40. Ser-43 carries the post-translational modification Phosphoserine. Thr-45 bears the Phosphothreonine; by MTOR mark. Thr-49 bears the Phosphothreonine mark. Tyr-53 carries the post-translational modification Phosphotyrosine. Positions Tyr-53–Met-59 match the YXXXXLphi motif motif. Residue Lys-56 forms a Glycyl lysine isopeptide (Lys-Gly) (interchain with G-Cter in ubiquitin) linkage. The residue at position 64 (Ser-64) is a Phosphoserine; by DYRK2, MAPK1, MAPK3 and MTOR. The tract at residues Ser-64–Ile-117 is disordered. Thr-69 is modified (phosphothreonine; by MTOR). Phosphothreonine is present on Thr-76. A compositionally biased stretch (polar residues) spans Gly-79–His-98. Phosphoserine occurs at positions 82, 95, and 99. Residues Ser-99–Gly-108 are compositionally biased toward basic and acidic residues. Position 100 is a phosphoserine; by DYRK2 (Ser-100). A Phosphoserine modification is found at Ser-111. The short motif at Phe-113–Ile-117 is the TOS motif element.

Belongs to the eIF4E-binding protein family. Hypophosphorylated EIF4EBP1 competes with EIF4G1/EIF4G3 to interact with EIF4E; insulin stimulated MAP-kinase (MAPK1 and MAPK3) or mTORC1 phosphorylation of EIF4EBP1 causes dissociation of the complex allowing EIF4G1/EIF4G3 to bind and consequent initiation of translation. Interacts (via TOS motif) with RPTOR; promoting phosphorylation by mTORC1. Phosphorylated on serine and threonine residues in response to insulin, EGF and PDGF. Phosphorylation at Thr-36, Thr-45, Ser-64 and Thr-69, corresponding to the hyperphosphorylated form, is regulated by mTORC1 and abolishes binding to EIF4E. Post-translationally, ubiquitinated: when eIF4E levels are low, hypophosphorylated form is ubiquitinated by the BCR(KLHL25) complex, leading to its degradation and serving as a homeostatic mechanism to maintain translation and prevent eIF4E inhibition when eIF4E levels are low. Not ubiquitinated when hyperphosphorylated (at Thr-36, Thr-45, Ser-64 and Thr-69) or associated with eIF4E. Expressed in all tissues examined; highest levels in fat and skeletal tissue, lowest levels in kidney.

It is found in the cytoplasm. The protein localises to the nucleus. Repressor of translation initiation that regulates EIF4E activity by preventing its assembly into the eIF4F complex: hypophosphorylated form competes with EIF4G1/EIF4G3 and strongly binds to EIF4E, leading to repress translation. In contrast, hyperphosphorylated form dissociates from EIF4E, allowing interaction between EIF4G1/EIF4G3 and EIF4E, leading to initiation of translation. Mediates the regulation of protein translation by hormones, growth factors and other stimuli that signal through the MAP kinase and mTORC1 pathways. In Rattus norvegicus (Rat), this protein is Eukaryotic translation initiation factor 4E-binding protein 1 (Eif4ebp1).